Here is a 341-residue protein sequence, read N- to C-terminus: Methionine import ATP-binding protein MetN (341 aa).

In terms of domain architecture, ABC transporter spans 9 to 247; it reads ISVQKVNKEI…PRSSITEELF (239 aa). 41-48 is a binding site for ATP; the sequence is GHSGSGKS.

It belongs to the ABC transporter superfamily. Methionine importer (TC 3.A.1.24) family. The complex is composed of two ATP-binding proteins (MetN), two transmembrane proteins (MetI) and a solute-binding protein (MetQ).

The protein resides in the cell inner membrane. The enzyme catalyses L-methionine(out) + ATP + H2O = L-methionine(in) + ADP + phosphate + H(+). It carries out the reaction D-methionine(out) + ATP + H2O = D-methionine(in) + ADP + phosphate + H(+). In terms of biological role, part of the ABC transporter complex MetNIQ involved in methionine import. Responsible for energy coupling to the transport system. The sequence is that of Methionine import ATP-binding protein MetN from Chlamydia caviae (strain ATCC VR-813 / DSM 19441 / 03DC25 / GPIC) (Chlamydophila caviae).